An 86-amino-acid chain; its full sequence is Exodeoxyribonuclease 7 small subunit (86 aa).

Positions 1–26 (MQDELFETEKAPQKNTKNAKNAPKKS) are disordered.

The protein belongs to the XseB family. As to quaternary structure, heterooligomer composed of large and small subunits.

It is found in the cytoplasm. It carries out the reaction Exonucleolytic cleavage in either 5'- to 3'- or 3'- to 5'-direction to yield nucleoside 5'-phosphates.. In terms of biological role, bidirectionally degrades single-stranded DNA into large acid-insoluble oligonucleotides, which are then degraded further into small acid-soluble oligonucleotides. The sequence is that of Exodeoxyribonuclease 7 small subunit from Helicobacter pylori (strain Shi470).